The following is a 200-amino-acid chain: dITP/XTP pyrophosphatase (200 aa).

Residue 16 to 21 (SNNDGK) coordinates substrate. 2 residues coordinate Mg(2+): glutamate 46 and aspartate 75. Catalysis depends on aspartate 75, which acts as the Proton acceptor. Residues serine 76, 154-157 (FGYD), lysine 177, and 182-183 (HR) each bind substrate.

The protein belongs to the HAM1 NTPase family. As to quaternary structure, homodimer. The cofactor is Mg(2+).

It carries out the reaction XTP + H2O = XMP + diphosphate + H(+). The enzyme catalyses dITP + H2O = dIMP + diphosphate + H(+). The catalysed reaction is ITP + H2O = IMP + diphosphate + H(+). In terms of biological role, pyrophosphatase that catalyzes the hydrolysis of nucleoside triphosphates to their monophosphate derivatives, with a high preference for the non-canonical purine nucleotides XTP (xanthosine triphosphate), dITP (deoxyinosine triphosphate) and ITP. Seems to function as a house-cleaning enzyme that removes non-canonical purine nucleotides from the nucleotide pool, thus preventing their incorporation into DNA/RNA and avoiding chromosomal lesions. The chain is dITP/XTP pyrophosphatase from Prochlorococcus marinus (strain SARG / CCMP1375 / SS120).